Consider the following 938-residue polypeptide: AP-2 complex subunit alpha-2 (938 aa).

Residues 11 to 12 (RG), Lys-43, Tyr-53, and 57 to 61 (KYVCK) contribute to the a 1,2-diacyl-sn-glycero-3-phospho-(1D-myo-inositol-3,4,5-trisphosphate) site. The interval 615–681 (LKKKKGPSTV…TGPPPSSGGG (67 aa)) is disordered. The span at 646–667 (PASTSAASTPSPSADLLGLGAV) shows a compositional bias: low complexity. Pro residues predominate over residues 668 to 677 (PPAPTGPPPS).

The protein belongs to the adaptor complexes large subunit family. As to quaternary structure, adaptor protein complex 2 (AP-2) is a heterotetramer composed of two large adaptins (alpha-type subunit AP2A1 or AP2A2 and beta-type subunit AP2B1), a medium adaptin (mu-type subunit AP2M1) and a small adaptin (sigma-type subunit AP2S1). Interacts with clathrin. Binds EPN1, EPS15, AMPH, SNAP91 and BIN1. Interacts with HIP1. Interacts with DGKD. Interacts with DENND1A, DENND1B and DENND1C. Interacts with FCHO1 and DAB2. Interacts with ATAT1; this interaction is required for efficient alpha-tubulin acetylation by ATAT1. Interacts with KIAA1107. Together with AP2B1 and AP2M1, it interacts with ADAM10; this interaction facilitates ADAM10 endocytosis from the plasma membrane during long-term potentiation in hippocampal neurons. Interacts with CLN3 (via dileucine motif). Interacts with ABCB11; this interaction regulates cell membrane expression of ABCB11 through its internalization in a clathrin-dependent manner and its subsequent degradation. Interacts with Cacfd1. Interacts with DNAJC6. In terms of tissue distribution, widely expressed.

It localises to the cell membrane. The protein resides in the membrane. The protein localises to the coated pit. Component of the adaptor protein complex 2 (AP-2). Adaptor protein complexes function in protein transport via transport vesicles in different membrane traffic pathways. Adaptor protein complexes are vesicle coat components and appear to be involved in cargo selection and vesicle formation. AP-2 is involved in clathrin-dependent endocytosis in which cargo proteins are incorporated into vesicles surrounded by clathrin (clathrin-coated vesicles, CCVs) which are destined for fusion with the early endosome. The clathrin lattice serves as a mechanical scaffold but is itself unable to bind directly to membrane components. Clathrin-associated adaptor protein (AP) complexes which can bind directly to both the clathrin lattice and to the lipid and protein components of membranes are considered to be the major clathrin adaptors contributing the CCV formation. AP-2 also serves as a cargo receptor to selectively sort the membrane proteins involved in receptor-mediated endocytosis. AP-2 seems to play a role in the recycling of synaptic vesicle membranes from the presynaptic surface. AP-2 recognizes Y-X-X-[FILMV] (Y-X-X-Phi) and [ED]-X-X-X-L-[LI] endocytosis signal motifs within the cytosolic tails of transmembrane cargo molecules. AP-2 may also play a role in maintaining normal post-endocytic trafficking through the ARF6-regulated, non-clathrin pathway. During long-term potentiation in hippocampal neurons, AP-2 is responsible for the endocytosis of ADAM10. The AP-2 alpha subunit binds polyphosphoinositide-containing lipids, positioning AP-2 on the membrane. The AP-2 alpha subunit acts via its C-terminal appendage domain as a scaffolding platform for endocytic accessory proteins. The AP-2 alpha and AP-2 sigma subunits are thought to contribute to the recognition of the [ED]-X-X-X-L-[LI] motif. The protein is AP-2 complex subunit alpha-2 of Rattus norvegicus (Rat).